We begin with the raw amino-acid sequence, 243 residues long: Uridylate kinase (243 aa).

Residue 12–15 coordinates ATP; the sequence is KLSG. The segment at 20–25 is involved in allosteric activation by GTP; that stretch reads GPGGSG. Gly-56 is a binding site for UMP. Residues Gly-57 and Arg-61 each contribute to the ATP site. UMP-binding positions include Asp-76 and 137-144; that span reads TGSPYFST. ATP-binding residues include Asn-165, Tyr-171, and Asp-174.

Belongs to the UMP kinase family. In terms of assembly, homohexamer.

It is found in the cytoplasm. The catalysed reaction is UMP + ATP = UDP + ADP. It participates in pyrimidine metabolism; CTP biosynthesis via de novo pathway; UDP from UMP (UMPK route): step 1/1. Allosterically activated by GTP. Inhibited by UTP. Catalyzes the reversible phosphorylation of UMP to UDP. In Oenococcus oeni (strain ATCC BAA-331 / PSU-1), this protein is Uridylate kinase.